A 526-amino-acid polypeptide reads, in one-letter code: 3-hydroxy-3-methylglutaryl-coenzyme A reductase 2 (526 aa).

Active-site charge relay system residues include E193, K325, and D401. The active-site Proton donor is H499. The segment at 503-526 (NRKTEAPAPQADTISMTHNLPHSD) is disordered. Over residues 514–526 (DTISMTHNLPHSD) the composition is skewed to polar residues.

Belongs to the HMG-CoA reductase family.

The enzyme catalyses (R)-mevalonate + 2 NADP(+) + CoA = (3S)-3-hydroxy-3-methylglutaryl-CoA + 2 NADPH + 2 H(+). It functions in the pathway metabolic intermediate biosynthesis; (R)-mevalonate biosynthesis; (R)-mevalonate from acetyl-CoA: step 3/3. This transmembrane glycoprotein is involved in the control of cholesterol biosynthesis. It is the rate-limiting enzyme of the sterol biosynthesis. The polypeptide is 3-hydroxy-3-methylglutaryl-coenzyme A reductase 2 (hmgB) (Dictyostelium discoideum (Social amoeba)).